Here is a 483-residue protein sequence, read N- to C-terminus: Uridine/cytidine kinase UKL1, chloroplastic (483 aa).

A chloroplast-targeting transit peptide spans 1 to 47; it reads MPEDSTAIDYVMEKASGPHFSGLRLDGLLSSPSKSSVSSPSHFRLSN. A uridine kinase region spans residues 59–264; it reads PHQPFVIGVT…IVQHIHTKLG (206 aa). The tract at residues 274–483 is uracil phosphoribosyltransferase; it reads NVFVIETTFQ…FGDRYFGTDE (210 aa). GTP is bound by residues Lys298, Arg307, and 341-344; that span reads CKKL. 5-phospho-alpha-D-ribose 1-diphosphate is bound by residues Arg351 and Arg376. Residue Arg396 participates in GTP binding. Residues Asp402, 407 to 410, and Glu473 contribute to the 5-phospho-alpha-D-ribose 1-diphosphate site; that span reads TGNS. Residue 472 to 474 participates in uracil binding; the sequence is GEF.

This sequence in the N-terminal section; belongs to the uridine kinase family. The protein in the C-terminal section; belongs to the UPRTase family.

The protein resides in the plastid. It is found in the chloroplast. The catalysed reaction is cytidine + ATP = CMP + ADP + H(+). It catalyses the reaction uridine + ATP = UMP + ADP + H(+). Its pathway is pyrimidine metabolism; CTP biosynthesis via salvage pathway; CTP from cytidine: step 1/3. The protein operates within pyrimidine metabolism; UMP biosynthesis via salvage pathway; UMP from uridine: step 1/1. In terms of biological role, involved in the pyrimidine salvage pathway. Phosphorylates uridine to uridine monophosphate (UMP). Phosphorylates cytidine to cytidine monophosphate (CMP). Does not possess uracil phosphoribosyltransferase (UPRTase) activity that catalyzes the conversion of uracil and 5-phospho-alpha-D-ribose 1-diphosphate (PRPP) to UMP and diphosphate. The polypeptide is Uridine/cytidine kinase UKL1, chloroplastic (Arabidopsis thaliana (Mouse-ear cress)).